The chain runs to 412 residues: MKMHLQRALVVLALLNFATVSLSLSTCTTLDFGHIKKKRVEAIRGQILSKLRLTSPPEPTVMTHVPYQVLALYNSTRELLEEMHGEREEGCTQENTESEYYAKEIHKFDMIQGLAEHNELAVCPKGITSKVFRFNVSSVEKNRTNLFRAEFRVLRVPNPSSKRNEQRIELFQILRPDEHIAKQRYIGGKNLPTRGTAEWLSFDVTDTVREWLLRRESNLGLEISIHCPCHTFQPNGDILENIHEVMEIKFKGVDNEDDHGRGDLGRLKKQKDHHNPHLILMMIPPHRLDNPGQGGQRKKRALDTNYCFRNLEENCCVRPLYIDFRQDLGWKWVHEPKGYYANFCSGPCPYLRSADTTHSTVLGLYNTLNPEASASPCCVPQDLEPLTILYYVGRTPKVEQLSNMVVKSCKCS.

An N-terminal signal peptide occupies residues 1-23 (MKMHLQRALVVLALLNFATVSLS). 3 N-linked (GlcNAc...) asparagine glycosylation sites follow: Asn-74, Asn-135, and Asn-142. Residues 261–263 (RGD) carry the Cell attachment site motif. An N5-methylglutamine modification is found at Gln-293. Cystine bridges form between Cys-307/Cys-316, Cys-315/Cys-378, Cys-344/Cys-409, and Cys-348/Cys-411.

The protein belongs to the TGF-beta family. As to quaternary structure, interacts with ASPN. Latency-associated peptide: Homodimer; disulfide-linked. Latency-associated peptide: Interacts with Transforming growth factor beta-3 (TGF-beta-3) chain; interaction is non-covalent and maintains (TGF-beta-3) in a latent state. Latency-associated peptide: Interacts with LRRC32/GARP; leading to regulate activation of TGF-beta-3 and promote epithelial fusion during palate development. Latency-associated peptide: Interacts (via cell attachment site) with integrins, leading to release of the active TGF-beta-3. Transforming growth factor beta-3: Homodimer; disulfide-linked. Transforming growth factor beta-3: Interacts with TGF-beta receptors (TGFBR1 and TGFBR2), leading to signal transduction. In terms of processing, transforming growth factor beta-3 proprotein: The precursor proprotein is cleaved in the Golgi apparatus to form Transforming growth factor beta-3 (TGF-beta-3) and Latency-associated peptide (LAP) chains, which remain non-covalently linked, rendering TGF-beta-3 inactive. Post-translationally, methylated at Gln-293 by N6AMT1.

The protein localises to the secreted. Its subcellular location is the extracellular space. It localises to the extracellular matrix. Transforming growth factor beta-3 proprotein: Precursor of the Latency-associated peptide (LAP) and Transforming growth factor beta-3 (TGF-beta-3) chains, which constitute the regulatory and active subunit of TGF-beta-3, respectively. Functionally, required to maintain the Transforming growth factor beta-3 (TGF-beta-3) chain in a latent state during storage in extracellular matrix. Associates non-covalently with TGF-beta-3 and regulates its activation via interaction with 'milieu molecules', such as LTBP1 and LRRC32/GARP, that control activation of TGF-beta-3. Interaction with integrins results in distortion of the Latency-associated peptide chain and subsequent release of the active TGF-beta-3. In terms of biological role, transforming growth factor beta-3: Multifunctional protein that regulates embryogenesis and cell differentiation and is required in various processes such as secondary palate development. Activation into mature form follows different steps: following cleavage of the proprotein in the Golgi apparatus, Latency-associated peptide (LAP) and Transforming growth factor beta-3 (TGF-beta-3) chains remain non-covalently linked rendering TGF-beta-3 inactive during storage in extracellular matrix. At the same time, LAP chain interacts with 'milieu molecules', such as LTBP1 and LRRC32/GARP that control activation of TGF-beta-3 and maintain it in a latent state during storage in extracellular milieus. TGF-beta-3 is released from LAP by integrins: integrin-binding results in distortion of the LAP chain and subsequent release of the active TGF-beta-3. Once activated following release of LAP, TGF-beta-3 acts by binding to TGF-beta receptors (TGFBR1 and TGFBR2), which transduce signal. In Homo sapiens (Human), this protein is Transforming growth factor beta-3 proprotein (TGFB3).